A 453-amino-acid chain; its full sequence is BPI fold-containing family B member 6 (453 aa).

The N-terminal stretch at 1–18 (MLRILCLALCSLLTGTRA) is a signal peptide. Asn114 carries N-linked (GlcNAc...) asparagine glycosylation. Cys137 and Cys174 form a disulfide bridge. An N-linked (GlcNAc...) asparagine glycan is attached at Asn190.

The protein belongs to the BPI/LBP/Plunc superfamily. BPI/LBP family. As to expression, detected at very low levels in normal tonsils, and at higher levels in hypertrophic tonsils.

Its subcellular location is the secreted. The polypeptide is BPI fold-containing family B member 6 (BPIFB6) (Homo sapiens (Human)).